Consider the following 326-residue polypeptide: uncharacterized protein (326 aa).

127-134 lines the ATP pocket; it reads GATGSGKS.

This sequence belongs to the GSP E family.

This is an uncharacterized protein from Escherichia coli (strain K12).